The sequence spans 311 residues: Chalcone synthase 4 (311 aa).

The active site involves cysteine 164.

Belongs to the thiolase-like superfamily. Chalcone/stilbene synthases family.

It carries out the reaction (E)-4-coumaroyl-CoA + 3 malonyl-CoA + 3 H(+) = 2',4,4',6'-tetrahydroxychalcone + 3 CO2 + 4 CoA. It participates in secondary metabolite biosynthesis; flavonoid biosynthesis. The primary product of this enzyme is 4,2',4',6'-tetrahydroxychalcone (also termed naringenin-chalcone or chalcone) which can under specific conditions spontaneously isomerize into naringenin. The sequence is that of Chalcone synthase 4 (CHS4) from Trifolium subterraneum (Subterranean clover).